We begin with the raw amino-acid sequence, 34 residues long: Photosystem II reaction center protein M (34 aa).

The chain crosses the membrane as a helical span at residues 5–25 (ILAFIATALFILVPTSFLLII).

This sequence belongs to the PsbM family. As to quaternary structure, PSII is composed of 1 copy each of membrane proteins PsbA, PsbB, PsbC, PsbD, PsbE, PsbF, PsbH, PsbI, PsbJ, PsbK, PsbL, PsbM, PsbT, PsbX, PsbY, PsbZ, Psb30/Ycf12, at least 3 peripheral proteins of the oxygen-evolving complex and a large number of cofactors. It forms dimeric complexes.

It is found in the plastid. Its subcellular location is the chloroplast thylakoid membrane. One of the components of the core complex of photosystem II (PSII). PSII is a light-driven water:plastoquinone oxidoreductase that uses light energy to abstract electrons from H(2)O, generating O(2) and a proton gradient subsequently used for ATP formation. It consists of a core antenna complex that captures photons, and an electron transfer chain that converts photonic excitation into a charge separation. This subunit is found at the monomer-monomer interface. This Triticum aestivum (Wheat) protein is Photosystem II reaction center protein M.